We begin with the raw amino-acid sequence, 109 residues long: Large ribosomal subunit protein bL31B (109 aa).

Residues 79–109 form a disordered region; it reads NVRQPAQQPQPEEDALPAAKGKKKVVTKKKK. Positions 98 to 109 are enriched in basic residues; it reads KGKKKVVTKKKK.

The protein belongs to the bacterial ribosomal protein bL31 family. Type B subfamily. In terms of assembly, part of the 50S ribosomal subunit.

This Chlamydia pneumoniae (Chlamydophila pneumoniae) protein is Large ribosomal subunit protein bL31B.